Reading from the N-terminus, the 37-residue chain is Large ribosomal subunit protein bL36 (37 aa).

The protein belongs to the bacterial ribosomal protein bL36 family.

This Synechococcus sp. (strain CC9311) protein is Large ribosomal subunit protein bL36.